An 82-amino-acid chain; its full sequence is MAADRAQNLQDTFLNHVRKTKTPLTIFLVNGVKLQGIVTWFDNFCLLLRRDGHSQLVYKHAISTIMPGAPIQLFEGGEDASA.

In terms of domain architecture, Sm spans 11–71 (DTFLNHVRKT…ISTIMPGAPI (61 aa)).

It belongs to the Hfq family. Homohexamer.

RNA chaperone that binds small regulatory RNA (sRNAs) and mRNAs to facilitate mRNA translational regulation in response to envelope stress, environmental stress and changes in metabolite concentrations. Also binds with high specificity to tRNAs. This chain is RNA-binding protein Hfq, found in Bradyrhizobium sp. (strain BTAi1 / ATCC BAA-1182).